A 168-amino-acid polypeptide reads, in one-letter code: GTP-dependent dephospho-CoA kinase (168 aa).

Asp-49, Ile-50, Val-51, Asp-68, Lys-70, and Glu-120 together coordinate GTP.

It belongs to the GTP-dependent DPCK family.

It carries out the reaction 3'-dephospho-CoA + GTP = GDP + CoA + H(+). The protein operates within cofactor biosynthesis; coenzyme A biosynthesis. Functionally, catalyzes the GTP-dependent phosphorylation of the 3'-hydroxyl group of dephosphocoenzyme A to form coenzyme A (CoA). This is GTP-dependent dephospho-CoA kinase from Pyrobaculum islandicum (strain DSM 4184 / JCM 9189 / GEO3).